Consider the following 215-residue polypeptide: Small ribosomal subunit protein uS7 (215 aa).

The protein belongs to the universal ribosomal protein uS7 family. As to quaternary structure, part of the 30S ribosomal subunit.

Its function is as follows. One of the primary rRNA binding proteins, it binds directly to 16S rRNA where it nucleates assembly of the head domain of the 30S subunit. Is located at the subunit interface close to the decoding center. The polypeptide is Small ribosomal subunit protein uS7 (Thermococcus gammatolerans (strain DSM 15229 / JCM 11827 / EJ3)).